The sequence spans 415 residues: Leucine-rich repeat-containing protein 34 (415 aa).

LRR repeat units follow at residues 246–272 (TLRY…LKSN) and 274–296 (TLEV…LSET).

In terms of assembly, interacts with NPM1 and NCL.

It localises to the nucleus. The protein localises to the nucleolus. Its subcellular location is the cytoplasm. Highly expressed in stem cells where it may be involved in regulation of pluripotency. In embryonic stem cells (ESCs), important for normal expression of the pluripotency regulators POU5F1/OCT4 and KLF4. Also important for expression of the ectodermal marker gene NES and the endodermal marker gene GATA4. Promotes stem cell proliferation in vitro. This chain is Leucine-rich repeat-containing protein 34 (Lrrc34), found in Rattus norvegicus (Rat).